Reading from the N-terminus, the 356-residue chain is Riboflavin biosynthesis protein RibD (356 aa).

The deaminase stretch occupies residues 1–148 (MIREIDKNYM…EDFFTYITQE (148 aa)). Positions 4-126 (EIDKNYMKLA…KLRNAGIEVD (123 aa)) constitute a CMP/dCMP-type deaminase domain. Residue H53 participates in Zn(2+) binding. Catalysis depends on E55, which acts as the Proton donor. Residues C78 and C87 each coordinate Zn(2+). A reductase region spans residues 149 to 356 (RPYITLKWAQ…EDLVIFFKRY (208 aa)). A157 is a binding site for NADP(+). S171 serves as a coordination point for substrate. W173 contacts NADP(+). R187 is a binding site for substrate. 2 residues coordinate NADP(+): T199 and D203. Substrate-binding residues include L207, R210, and E290. 292–298 (GPRTLTS) contacts NADP(+).

The protein in the N-terminal section; belongs to the cytidine and deoxycytidylate deaminase family. It in the C-terminal section; belongs to the HTP reductase family. The cofactor is Zn(2+).

The catalysed reaction is 2,5-diamino-6-hydroxy-4-(5-phosphoribosylamino)-pyrimidine + H2O + H(+) = 5-amino-6-(5-phospho-D-ribosylamino)uracil + NH4(+). It carries out the reaction 5-amino-6-(5-phospho-D-ribitylamino)uracil + NADP(+) = 5-amino-6-(5-phospho-D-ribosylamino)uracil + NADPH + H(+). It functions in the pathway cofactor biosynthesis; riboflavin biosynthesis; 5-amino-6-(D-ribitylamino)uracil from GTP: step 2/4. The protein operates within cofactor biosynthesis; riboflavin biosynthesis; 5-amino-6-(D-ribitylamino)uracil from GTP: step 3/4. Its function is as follows. Converts 2,5-diamino-6-(ribosylamino)-4(3h)-pyrimidinone 5'-phosphate into 5-amino-6-(ribosylamino)-2,4(1h,3h)-pyrimidinedione 5'-phosphate. In Aquifex aeolicus (strain VF5), this protein is Riboflavin biosynthesis protein RibD (ribD).